The following is an 814-amino-acid chain: Cadherin-15 (814 aa).

The signal sequence occupies residues 1–21 (MDAAFLLVLGLLAQSLCLSLG). The propeptide occupies 22-60 (VPGWRRPTTLYPWRRAPALSRVRRAWVIPPISVSENHKR). Cadherin domains are found at residues 61–152 (LPYP…RPAF), 153–260 (LQEA…APEF), 261–375 (TRDE…PPVF), 376–481 (QENP…DHAP), and 482–590 (VLAP…VCLP). Residues 61–606 (LPYPLVQIKS…AGGTGLSLGA (546 aa)) are Extracellular-facing. Asn-227 is a glycosylation site (N-linked (GlcNAc...) asparagine). Asn-531, Asn-538, and Asn-576 each carry an N-linked (GlcNAc...) asparagine glycan. The helical transmembrane segment at 607 to 626 (LVIVLASALLLLVLVLLVAL) threads the bilayer. Residues 627-814 (RARFWKQSRG…LLPRHRGRTA (188 aa)) are Cytoplasmic-facing. 2 disordered regions span residues 636-663 (GKGLLHGPQDDLRDNVLNYDEQGGGEED) and 676-703 (TALSLPLGPPPLRRDAPQGRLHPQPPRV).

In terms of tissue distribution, expressed in the brain and cerebellum.

Its subcellular location is the cell membrane. Its function is as follows. Cadherins are calcium-dependent cell adhesion proteins. They preferentially interact with themselves in a homophilic manner in connecting cells; cadherins may thus contribute to the sorting of heterogeneous cell types. M-cadherin is part of the myogenic program and may provide a trigger for terminal muscle differentiation. The protein is Cadherin-15 (CDH15) of Homo sapiens (Human).